Consider the following 94-residue polypeptide: Bacterial microcompartment shell protein PduA (94 aa).

One can recognise a BMC domain in the interval 5-89 (ALGMVETKGL…PHTDVEKILP (85 aa)).

It belongs to the bacterial microcompartments protein family. As to quaternary structure, homohexamer with a central pore of about 5.6 Angstroms in diameter. The hexamers pack against each other in arrays. Interacts with the N-terminus of PduP which targets PduP to the BMC. Modeling suggests PduC, PduD, PduE, PduL and PduP interact with a cleft formed by the C-terminal segments of 2 adjacent PduA subunits (on the BMC luminal side) in the hexamer.

The protein localises to the bacterial microcompartment. The protein operates within polyol metabolism; 1,2-propanediol degradation. One of the major shell proteins of the bacterial microcompartment (BMC) dedicated to 1,2-propanediol (1,2-PD) degradation. At least one of PduA or PduJ is required for BMC assembly; it must be encoded as the first gene in the pdu operon. Not required for structural integrity of BMCs, it is required to mitigate propionaldehyde toxicity. Controls diffusion of 1,2-PD into and propionaldehyde out of the BMC shell; residue 40 is particularly important for pore permeability. Overexpression of this protein leads to aberrant filaments that extend the length of the cell, cross the cleavage furrow and impair division. The filaments form nanotubes with a hollow center. The isolated BMC shell component protein ratio for J:A:B':B:K:T:U is approximately 15:10:7:6:1:1:2. Edge residues (particularly Lys-26) are important for function and assembly of the BMC, and influence array formation by hexamers. Interaction with PduA allows encapsulation of at least PduP in BMCs. Probably also targets PduD to the BMC. PduA is probably the hub for binding multiple enzymes to the interior of the BMC; modeling suggests PduC, PduD, PduE, PduG, PduL and PduP are targeted to PduA. Its function is as follows. The 1,2-PD-specific bacterial microcompartment (BMC) concentrates low levels of 1,2-PD catabolic enzymes, concentrates volatile reaction intermediates thus enhancing pathway flux and keeps the level of toxic, mutagenic propionaldehyde low. In Salmonella typhimurium (strain LT2 / SGSC1412 / ATCC 700720), this protein is Bacterial microcompartment shell protein PduA.